The primary structure comprises 374 residues: Putative glutamate--cysteine ligase 2 (374 aa).

The protein belongs to the glutamate--cysteine ligase type 2 family. YbdK subfamily.

The catalysed reaction is L-cysteine + L-glutamate + ATP = gamma-L-glutamyl-L-cysteine + ADP + phosphate + H(+). Its function is as follows. ATP-dependent carboxylate-amine ligase which exhibits weak glutamate--cysteine ligase activity. The protein is Putative glutamate--cysteine ligase 2 of Acidovorax sp. (strain JS42).